The following is a 369-amino-acid chain: Sesquiterpene cyclase hepA (369 aa).

The Mg(2+) site is built by D100, N248, S252, and D256. Positions 100-104 (DDEID) match the DDXXD motif motif. A (N,D)D(L,I,V)X(S,T)XXXE motif motif is present at residues 255 to 262 (NDLLSLRK).

It belongs to the terpene synthase family. It depends on Mg(2+) as a cofactor.

Its function is as follows. Sesquiterpene cyclase; part of the gene cluster that mediates the biosynthesis of heptelidic acid (HA), a sesquiterpene lactone that acts as an inhibitor of glyceraldehyde-3-phosphatedehydrogenase (GAPDH) and a growth inhibitor of the salt-tolerant lactic acid bacteria in soy sauce brewing. The sequence is that of Sesquiterpene cyclase hepA from Aspergillus oryzae (strain ATCC 42149 / RIB 40) (Yellow koji mold).